The following is a 902-amino-acid chain: Phosphoenolpyruvate carboxylase (902 aa).

Residue His132 is part of the active site. The interval 327-346 (DALERPEKTAGKKSSKRTPY) is disordered. Lys561 is a catalytic residue.

Belongs to the PEPCase type 1 family. Mg(2+) serves as cofactor.

The enzyme catalyses oxaloacetate + phosphate = phosphoenolpyruvate + hydrogencarbonate. Its function is as follows. Forms oxaloacetate, a four-carbon dicarboxylic acid source for the tricarboxylic acid cycle. The polypeptide is Phosphoenolpyruvate carboxylase (Corynebacterium diphtheriae (strain ATCC 700971 / NCTC 13129 / Biotype gravis)).